A 512-amino-acid chain; its full sequence is Maturase K (512 aa).

The protein belongs to the intron maturase 2 family. MatK subfamily.

The protein resides in the plastid. It is found in the chloroplast. In terms of biological role, usually encoded in the trnK tRNA gene intron. Probably assists in splicing its own and other chloroplast group II introns. In Dalea wrightii (Wright's prairie clover), this protein is Maturase K.